The following is a 65-amino-acid chain: MKAKDIRALTTDQMLEKEKQYKEELFNLRFQQATGQLENTARLRQVRKNIARIKTILSEKELSKN.

Belongs to the universal ribosomal protein uL29 family.

The polypeptide is Large ribosomal subunit protein uL29 (Lactobacillus johnsonii (strain CNCM I-12250 / La1 / NCC 533)).